A 210-amino-acid polypeptide reads, in one-letter code: Adenylate kinase (210 aa).

An ATP-binding site is contributed by Gly-10–Thr-15. The NMP stretch occupies residues Ser-30–Ile-54. Residues Arg-36, Glu-52–Ile-54, Gly-80–Arg-83, and Gln-87 each bind AMP. Residues Gly-117–Asp-154 are LID. ATP-binding positions include Arg-118 and Ile-127–Tyr-128. AMP contacts are provided by Arg-151 and Arg-162. Phe-195 is an ATP binding site.

Belongs to the adenylate kinase family. As to quaternary structure, monomer.

It localises to the cytoplasm. The catalysed reaction is AMP + ATP = 2 ADP. Its pathway is purine metabolism; AMP biosynthesis via salvage pathway; AMP from ADP: step 1/1. Its function is as follows. Catalyzes the reversible transfer of the terminal phosphate group between ATP and AMP. Plays an important role in cellular energy homeostasis and in adenine nucleotide metabolism. This chain is Adenylate kinase, found in Wigglesworthia glossinidia brevipalpis.